A 410-amino-acid polypeptide reads, in one-letter code: MGSCSPQLPLICLSDQTLKPGSSKWVKVRSDVRKALEDYGCFEAKIDQVSMELQGSVLKAMQELFALPTEAKQRNVCPKPFAGYFSHNGLSESFGIKDANILEKAHEFTQQLWPEGNKSIKMIQLYAEKLAELDMMVRRLILESYGIEYFIDEHLNSTYYRMRLMKYIARPDNDITAAVGANVDNGANDNADGDANVNDDGASIGVKVNVDVGDDVNDNDSVNIGVGVDINVETNVNGDLDAEANGDATAWVVGAVSGNASVGAKEANVDAELGLPSHTDKSLSGIIYQHQIDGLEVKTKEGKWIRVKPAPNTVIVIAGDALCALMNGRIPSPYHRVRVTERKKTRYAAALFSYPKEGYIIDSPKELVDEKHPRAFKPFDFVDLFNFYHTEAGRRAPSTLQAFCGVSAGK.

Residues 258–355 (GNASVGAKEA…RYAAALFSYP (98 aa)) form the Fe2OG dioxygenase domain. H278, D280, and H335 together coordinate Fe cation. R346 is a binding site for 2-oxoglutarate.

This sequence belongs to the iron/ascorbate-dependent oxidoreductase family. Fe(2+) serves as cofactor.

In terms of biological role, 2-oxoglutarate-dependent dioxygenase involved in glucosinolates biosynthesis. Catalyzes the conversion of methylsulfinylalkyl glucosinolates to hydroxyalkyl glucosinolates. In Arabidopsis thaliana (Mouse-ear cress), this protein is 2-oxoglutarate-dependent dioxygenase AOP3 (AOP3).